The sequence spans 249 residues: Phosphomannomutase 1 (249 aa).

Asp12 serves as the catalytic Nucleophile. 2 residues coordinate Mg(2+): Asp12 and Asp14. The Proton donor/acceptor role is filled by Asp14. Arg21, Arg123, Arg134, Arg141, Ser179, and Asp181 together coordinate alpha-D-mannose 1-phosphate. Positions 209, 223, and 227 each coordinate Mg(2+).

It belongs to the eukaryotic PMM family. Homodimer.

Its subcellular location is the cytoplasm. It catalyses the reaction alpha-D-mannose 1-phosphate = D-mannose 6-phosphate. Its pathway is nucleotide-sugar biosynthesis; GDP-alpha-D-mannose biosynthesis; alpha-D-mannose 1-phosphate from D-fructose 6-phosphate: step 2/2. Involved in the synthesis of the GDP-mannose and dolichol-phosphate-mannose required for a number of critical mannosyl transfer reactions. In Dictyostelium discoideum (Social amoeba), this protein is Phosphomannomutase 1 (pmmA).